Here is a 518-residue protein sequence, read N- to C-terminus: Glutamate--cysteine ligase (518 aa).

This sequence belongs to the glutamate--cysteine ligase type 1 family. Type 1 subfamily.

The catalysed reaction is L-cysteine + L-glutamate + ATP = gamma-L-glutamyl-L-cysteine + ADP + phosphate + H(+). It participates in sulfur metabolism; glutathione biosynthesis; glutathione from L-cysteine and L-glutamate: step 1/2. This is Glutamate--cysteine ligase from Escherichia coli O127:H6 (strain E2348/69 / EPEC).